We begin with the raw amino-acid sequence, 287 residues long: 3-alpha-hydroxysteroid sulfotransferase (287 aa).

44 to 49 (KSGTNW) is a 3'-phosphoadenylyl sulfate binding site. 2 residues coordinate substrate: W72 and W77. H99 functions as the Proton acceptor in the catalytic mechanism. Residues R121, S129, Y184, 218 to 223 (SSFQFM), and 247 to 249 (RKG) each bind 3'-phosphoadenylyl sulfate.

It belongs to the sulfotransferase 1 family. Homodimer. As to expression, adrenal gland and liver.

Its subcellular location is the cytoplasm. The enzyme catalyses an alcohol + 3'-phosphoadenylyl sulfate = an alkyl sulfate + adenosine 3',5'-bisphosphate + H(+). Functionally, sulfotransferase that utilizes 3'-phospho-5'-adenylyl sulfate (PAPS) as sulfonate donor to catalyze the sulfonation of 3-alpha-hydroxyl groups of neutral steroids. The sequence is that of 3-alpha-hydroxysteroid sulfotransferase (STD1) from Cavia porcellus (Guinea pig).